A 254-amino-acid polypeptide reads, in one-letter code: MHINYISVGNRLLPLSFQCAAGEKVYVAGPNGSGKSTLLSAIAGTLSSREGVKGEVLINETSLLTLPLAEQAIYRAYLCQQSRPAFNVDVFQMLALSLPVGRHVAEPEVQAAVRRVVELVQMQDKLHRSVQALSGGEWQRVRLAAVCLQVWRSLNPYSQLLILDEPAAPLDVAQAKWLYQLIDEMAAQGLVVIVANHDLNRVYQHADKVLLLNQGVLTAYGSADEVMSVENLQQVFETPVKKVAVDGQPYLIFT.

The region spanning 3–239 (INYISVGNRL…ENLQQVFETP (237 aa)) is the ABC transporter domain. Residue 29-36 (GPNGSGKS) participates in ATP binding.

The protein belongs to the ABC transporter superfamily. Vitamin B12 importer (TC 3.A.1.13.1) family. As to quaternary structure, the complex is composed of two ATP-binding proteins (BtuD), two transmembrane proteins (BtuC) and a solute-binding protein (BtuF).

It localises to the cell inner membrane. It catalyses the reaction an R-cob(III)alamin(out) + ATP + H2O = an R-cob(III)alamin(in) + ADP + phosphate + H(+). Functionally, part of the ABC transporter complex BtuCDF involved in vitamin B12 import. Responsible for energy coupling to the transport system. This chain is Vitamin B12 import ATP-binding protein BtuD, found in Vibrio vulnificus (strain CMCP6).